We begin with the raw amino-acid sequence, 180 residues long: MDLEKLKKDTQVIIDDVIKQTEIKAGQVFVLGLSSSEVNGGLIGHASSSEIGQVIVSVIHKTLSDKGIYLAVQACEHLNRALLIEEELAEKKDWEIVSVIPQLHAGGSGQVAAYQLFKSPVEVEHIVANAGLDIGDTSIGMHVKHVQIPVRPILRELGGAHVTALKSRPKLIGGERARYK.

Belongs to the UPF0340 family.

The protein is UPF0340 protein LL0489 (yeiF) of Lactococcus lactis subsp. lactis (strain IL1403) (Streptococcus lactis).